The chain runs to 135 residues: VRANRCLKGWLDFRGNCYGYFRQELPWRKAEAWCRVVRGGCHLASIHTSEEHRAVAKFISQCRRGEEGDDVWIGLYHWNKSWSWIDGSKMHYSAWDDDDFSKGQYCAALEDSSGFLSWEDDACSERNAFICKCAA.

Cystine bridges form between cysteine 6/cysteine 17, cysteine 34/cysteine 131, and cysteine 106/cysteine 123. The C-type lectin domain maps to 13–132 (FRGNCYGYFR…CSERNAFICK (120 aa)).

Its subcellular location is the secreted. It is found in the extracellular space. The protein resides in the extracellular matrix. This Rhea americana (Greater rhea) protein is Rheacalcin-1.